The following is a 377-amino-acid chain: MSEVFDLTCDLISRPSVTPEDAGCQAMIAARLERVGFTCEHLHYGSVANLWATHGQGAPVLVLLGHTDVVPPGPIEAWTSNPFIPQRREGKLYGRGAADMKGSVAAFVIAAERFLVAHPGHPGTLAILLTSDEEGQAIDGVRKVAETLRQRGQRIDWCLTGEPSSSERLGDLLRVGRRGSLSATLHVKGVQGHVAYPHQARNPIHLAVPALAALTGRHWDDGDESFPSTSLQISNIHAGTGANNVIPGALEVAFNLRYNPHWSAPRLESEIVALLDQHGLDYTLHWHRSGEPFYTPEGKLRRIAREVLERFSGAPPEESTGGGTSDARFIAPLGAQCIEVGPVNASIHQVDEHVCLADLEALPDLYQLLIERLLAEH.

Histidine 66 contacts Zn(2+). Residue aspartate 68 is part of the active site. Aspartate 99 lines the Zn(2+) pocket. Glutamate 133 serves as the catalytic Proton acceptor. Residues glutamate 134, glutamate 162, and histidine 348 each coordinate Zn(2+).

It belongs to the peptidase M20A family. DapE subfamily. In terms of assembly, homodimer. The cofactor is Zn(2+). It depends on Co(2+) as a cofactor.

The catalysed reaction is N-succinyl-(2S,6S)-2,6-diaminopimelate + H2O = (2S,6S)-2,6-diaminopimelate + succinate. Its pathway is amino-acid biosynthesis; L-lysine biosynthesis via DAP pathway; LL-2,6-diaminopimelate from (S)-tetrahydrodipicolinate (succinylase route): step 3/3. Its function is as follows. Catalyzes the hydrolysis of N-succinyl-L,L-diaminopimelic acid (SDAP), forming succinate and LL-2,6-diaminopimelate (DAP), an intermediate involved in the bacterial biosynthesis of lysine and meso-diaminopimelic acid, an essential component of bacterial cell walls. The protein is Succinyl-diaminopimelate desuccinylase of Xylella fastidiosa (strain M12).